The chain runs to 239 residues: Hexuronic acid methyltransferase AglP (239 aa).

This sequence belongs to the FkbM methyltransferase family.

It localises to the cytoplasm. It participates in cell surface structure biogenesis; S-layer biogenesis. Functionally, involved in the assembly of a N-linked pentasaccharide that decorates the S-layer glycoprotein and flagellins. S-adenosyl-L-methionine-dependent methyltransferase that modifies the hexuronic acid found at position 4 of the pentasaccharide. This is Hexuronic acid methyltransferase AglP (aglP) from Haloferax volcanii (strain ATCC 29605 / DSM 3757 / JCM 8879 / NBRC 14742 / NCIMB 2012 / VKM B-1768 / DS2) (Halobacterium volcanii).